A 298-amino-acid polypeptide reads, in one-letter code: ADP/ATP translocase 3 (298 aa).

Residue Met-1 is modified to N-acetylmethionine. Residues 1 to 7 (MTEQAIS) are Mitochondrial intermembrane-facing. Thr-2 bears the N-acetylthreonine; in ADP/ATP translocase 3, N-terminally processed mark. A Solcar 1 repeat occupies 6–98 (ISFAKDFLAG…FAFKDKYKQI (93 aa)). A helical transmembrane segment spans residues 8-37 (FAKDFLAGGIAAAISKTAVAPIERVKLLLQ). At 38–74 (VQHASKQIAADKQYKGIVDCIVRIPKEQGVLSFWRGN) the chain is on the mitochondrial matrix side. At Lys-52 the chain carries N6,N6,N6-trimethyllysine. A helical transmembrane segment spans residues 75-99 (LANVIRYFPTQALNFAFKDKYKQIF). ADP is bound by residues Arg-80 and Lys-92. The Mitochondrial intermembrane segment spans residues 100–109 (LGGVDKRTQF). Position 105 is an N6-acetyllysine (Lys-105). The chain crosses the membrane as a helical span at residues 110–130 (WRYFAGNLASGGAAGATSLCF). 2 Solcar repeats span residues 111–201 (RYFA…AKGM) and 212–297 (VSWM…LKKV). Residues 131–178 (VYPLDFARTRLAADVGKSGSEREFRGLGDCLVKITKSDGIRGLYQGFN) lie on the Mitochondrial matrix side of the membrane. A helical transmembrane segment spans residues 179–199 (VSVQGIIIYRAAYFGIYDTAK). Residues 200–210 (GMLPDPKNTHI) lie on the Mitochondrial intermembrane side of the membrane. Residues 211-231 (VVSWMIAQTVTAVAGVVSYPF) form a helical membrane-spanning segment. Over 232–273 (DTVRRRMMMQSGRKGADIMYKGTVDCWRKILKDEGGKAFFKG) the chain is Mitochondrial matrix. Residue Arg-235 coordinates ADP. The segment at 235–240 (RRRMMM) is important for transport activity. Residues 235–240 (RRRMMM) carry the Nucleotide carrier signature motif motif. Lys-268 carries the N6-acetyllysine modification. The helical transmembrane segment at 274-291 (AWSNVLRGMGGAFVLVLY) threads the bilayer. The Mitochondrial intermembrane portion of the chain corresponds to 292 to 298 (DELKKVI).

Belongs to the mitochondrial carrier (TC 2.A.29) family. As to quaternary structure, monomer. Found in a complex with ARL2, ARL2BP and SLC25A6/ANT3. Post-translationally, trimethylated by ANTKMT at Lys-52.

It is found in the mitochondrion inner membrane. It localises to the membrane. The catalysed reaction is ADP(in) + ATP(out) = ADP(out) + ATP(in). The enzyme catalyses H(+)(in) = H(+)(out). With respect to regulation, the matrix-open state (m-state) is inhibited by the membrane-permeable bongkrekic acid (BKA). The cytoplasmic-open state (c-state) is inhibited by the membrane-impermeable toxic inhibitor carboxyatractyloside (CATR). Proton transporter activity is inhibited by ADP:ATP antiporter activity. In terms of biological role, ADP:ATP antiporter that mediates import of ADP into the mitochondrial matrix for ATP synthesis, and export of ATP out to fuel the cell. Cycles between the cytoplasmic-open state (c-state) and the matrix-open state (m-state): operates by the alternating access mechanism with a single substrate-binding site intermittently exposed to either the cytosolic (c-state) or matrix (m-state) side of the inner mitochondrial membrane. In addition to its ADP:ATP antiporter activity, also involved in mitochondrial uncoupling and mitochondrial permeability transition pore (mPTP) activity. Plays a role in mitochondrial uncoupling by acting as a proton transporter: proton transport uncouples the proton flows via the electron transport chain and ATP synthase to reduce the efficiency of ATP production and cause mitochondrial thermogenesis. Proton transporter activity is inhibited by ADP:ATP antiporter activity, suggesting that SLC25A6/ANT3 acts as a master regulator of mitochondrial energy output by maintaining a delicate balance between ATP production (ADP:ATP antiporter activity) and thermogenesis (proton transporter activity). Proton transporter activity requires free fatty acids as cofactor, but does not transport it. Also plays a key role in mPTP opening, a non-specific pore that enables free passage of the mitochondrial membranes to solutes of up to 1.5 kDa, and which contributes to cell death. It is however unclear if SLC25A6/ANT3 constitutes a pore-forming component of mPTP or regulates it. The polypeptide is ADP/ATP translocase 3 (Bos taurus (Bovine)).